Consider the following 159-residue polypeptide: Succinate dehydrogenase [ubiquinone] cytochrome b small subunit, mitochondrial (159 aa).

The N-terminal 56 residues, 1 to 56 (MAVLLKLGVLCSGQGARALLLRSRVVRPAYVSAFLQDQPTQGRCGTQHIHLSPSHH), are a transit peptide targeting the mitochondrion. Over 57-63 (SGSKAAS) the chain is Mitochondrial matrix. Residues 64–85 (LHWTSERVVSVLLLGLIPAGYL) traverse the membrane as a helical segment. At 86–90 (NPCSV) the chain is on the mitochondrial intermembrane side. The helical transmembrane segment at 91-111 (VDYSLAAALTLHSHWGLGQVV) threads the bilayer. H102 is a binding site for heme b. At 112–120 (TDYVHGDTL) the chain is on the mitochondrial matrix side. Y114 contacts a ubiquinone. A helical transmembrane segment spans residues 121–142 (PKAARAGLLALSALTFAGLCYF). Over 143–159 (NYHDVGICRAVAMLWKL) the chain is Mitochondrial intermembrane.

The protein belongs to the CybS family. Component of complex II composed of four subunits: the flavoprotein (FP) SDHA, iron-sulfur protein (IP) SDHB, and a cytochrome b560 composed of SDHC and SDHD.

The protein resides in the mitochondrion inner membrane. It functions in the pathway carbohydrate metabolism; tricarboxylic acid cycle. Membrane-anchoring subunit of succinate dehydrogenase (SDH) that is involved in complex II of the mitochondrial electron transport chain and is responsible for transferring electrons from succinate to ubiquinone (coenzyme Q). SDH also oxidizes malate to the non-canonical enol form of oxaloacetate, enol-oxaloacetate. Enol-oxaloacetate, which is a potent inhibitor of the succinate dehydrogenase activity, is further isomerized into keto-oxaloacetate. The polypeptide is Succinate dehydrogenase [ubiquinone] cytochrome b small subunit, mitochondrial (Sdhd) (Mus musculus (Mouse)).